The sequence spans 939 residues: Isoleucine--tRNA ligase (939 aa).

Residues 58 to 68 (PYANGDIHIGH) carry the 'HIGH' region motif. Residue glutamate 574 participates in L-isoleucyl-5'-AMP binding. Positions 615-619 (KMSKS) match the 'KMSKS' region motif. Position 618 (lysine 618) interacts with ATP. Zn(2+)-binding residues include cysteine 902, cysteine 905, cysteine 922, and cysteine 925.

The protein belongs to the class-I aminoacyl-tRNA synthetase family. IleS type 1 subfamily. In terms of assembly, monomer. The cofactor is Zn(2+).

The protein resides in the cytoplasm. It carries out the reaction tRNA(Ile) + L-isoleucine + ATP = L-isoleucyl-tRNA(Ile) + AMP + diphosphate. Its function is as follows. Catalyzes the attachment of isoleucine to tRNA(Ile). As IleRS can inadvertently accommodate and process structurally similar amino acids such as valine, to avoid such errors it has two additional distinct tRNA(Ile)-dependent editing activities. One activity is designated as 'pretransfer' editing and involves the hydrolysis of activated Val-AMP. The other activity is designated 'posttransfer' editing and involves deacylation of mischarged Val-tRNA(Ile). The sequence is that of Isoleucine--tRNA ligase from Aromatoleum aromaticum (strain DSM 19018 / LMG 30748 / EbN1) (Azoarcus sp. (strain EbN1)).